The sequence spans 205 residues: Arginine exporter protein ArgO (205 aa).

The next 6 membrane-spanning stretches (helical) occupy residues 1 to 21 (MLAVFLQGFALSAAMILPLGP), 42 to 62 (LCALSDIILICAGIFGGSALL), 67 to 87 (LLLALVTWGGVAFLLWYGWGA), 111 to 131 (IIVTLLAVTWLNPHVYLDTFV), 147 to 167 (WFAFGAVSASVAWFFALALLA), and 182 to 202 (VINLLVGGVMWFIAFQLARQG).

The protein belongs to the LysE/ArgO transporter (TC 2.A.75) family.

It localises to the cell inner membrane. It carries out the reaction L-arginine(in) = L-arginine(out). Involved in the export of arginine. Important to control the intracellular level of arginine and the correct balance between arginine and lysine. The sequence is that of Arginine exporter protein ArgO from Yersinia enterocolitica serotype O:8 / biotype 1B (strain NCTC 13174 / 8081).